A 292-amino-acid chain; its full sequence is 2,3-dihydroxybenzoate decarboxylase (292 aa).

Residue cysteine 263 is part of the active site.

The protein belongs to the metallo-dependent hydrolases superfamily. As to quaternary structure, homotetramer.

The enzyme catalyses 2,3-dihydroxybenzoate + H(+) = catechol + CO2. It functions in the pathway aromatic compound metabolism; benzoate degradation via hydroxylation. The chain is 2,3-dihydroxybenzoate decarboxylase from Aspergillus niger.